Consider the following 477-residue polypeptide: Bifunctional protein HldE (477 aa).

The ribokinase stretch occupies residues 1–318 (MKVTLPEFER…ENAVRGRAET (318 aa)). Lys179 carries the post-translational modification N6-acetyllysine. 195 to 198 (NLSE) serves as a coordination point for ATP. Residue Asp264 is part of the active site. The cytidylyltransferase stretch occupies residues 344 to 477 (MTNGVFDILH…IKKIQQDKKG (134 aa)).

The protein in the N-terminal section; belongs to the carbohydrate kinase PfkB family. It in the C-terminal section; belongs to the cytidylyltransferase family. Homodimer.

It catalyses the reaction D-glycero-beta-D-manno-heptose 7-phosphate + ATP = D-glycero-beta-D-manno-heptose 1,7-bisphosphate + ADP + H(+). The enzyme catalyses D-glycero-beta-D-manno-heptose 1-phosphate + ATP + H(+) = ADP-D-glycero-beta-D-manno-heptose + diphosphate. Its pathway is nucleotide-sugar biosynthesis; ADP-L-glycero-beta-D-manno-heptose biosynthesis; ADP-L-glycero-beta-D-manno-heptose from D-glycero-beta-D-manno-heptose 7-phosphate: step 1/4. It participates in nucleotide-sugar biosynthesis; ADP-L-glycero-beta-D-manno-heptose biosynthesis; ADP-L-glycero-beta-D-manno-heptose from D-glycero-beta-D-manno-heptose 7-phosphate: step 3/4. In terms of biological role, catalyzes the phosphorylation of D-glycero-D-manno-heptose 7-phosphate at the C-1 position to selectively form D-glycero-beta-D-manno-heptose-1,7-bisphosphate. Catalyzes the ADP transfer from ATP to D-glycero-beta-D-manno-heptose 1-phosphate, yielding ADP-D-glycero-beta-D-manno-heptose. This is Bifunctional protein HldE from Shigella dysenteriae serotype 1 (strain Sd197).